A 637-amino-acid chain; its full sequence is Biosynthetic arginine decarboxylase (637 aa).

Position 101 is an N6-(pyridoxal phosphate)lysine (Lys-101). Phe-286–Tyr-296 contributes to the substrate binding site.

The protein belongs to the Orn/Lys/Arg decarboxylase class-II family. SpeA subfamily. Requires Mg(2+) as cofactor. Pyridoxal 5'-phosphate is required as a cofactor.

The enzyme catalyses L-arginine + H(+) = agmatine + CO2. The protein operates within amine and polyamine biosynthesis; agmatine biosynthesis; agmatine from L-arginine: step 1/1. In terms of biological role, catalyzes the biosynthesis of agmatine from arginine. The polypeptide is Biosynthetic arginine decarboxylase (Shewanella sp. (strain MR-7)).